The primary structure comprises 221 residues: GTP cyclohydrolase III (221 aa).

It belongs to the archaeal-type GTP cyclohydrolase family.

The catalysed reaction is GTP + 3 H2O = 2-amino-5-formylamino-6-(5-phospho-D-ribosylamino)pyrimidin-4(3H)-one + 2 phosphate + 2 H(+). In terms of biological role, catalyzes the formation of 2-amino-5-formylamino-6-ribofuranosylamino-4(3H)-pyrimidinone ribonucleotide monophosphate and inorganic phosphate from GTP. Also has an independent pyrophosphate phosphohydrolase activity. The sequence is that of GTP cyclohydrolase III from Pyrobaculum calidifontis (strain DSM 21063 / JCM 11548 / VA1).